We begin with the raw amino-acid sequence, 139 residues long: uncharacterized protein (139 aa).

2 helical membrane passes run 71–91 (LFSA…ATLL) and 97–117 (ENEL…FVMV).

Belongs to the RseC family.

The protein resides in the cell inner membrane. This is an uncharacterized protein from Haemophilus influenzae (strain ATCC 51907 / DSM 11121 / KW20 / Rd).